Consider the following 976-residue polypeptide: 3-hydroxy-3-methylglutaryl-coenzyme A reductase (976 aa).

The Lumenal segment spans residues 1–36; that stretch reads MDHEGCQGQHPQQCCQWVSNAWSEFLDLLKNAETLD. An SSD domain is found at 36 to 217; the sequence is DIVIMLLGYI…FTFYTAILSI (182 aa). The chain crosses the membrane as a helical span at residues 37-57; sequence IVIMLLGYIAMHLTFVSLFLS. Residues 58-64 are Cytoplasmic-facing; the sequence is MRKMGSK. Residues 65–85 traverse the membrane as a helical segment; sequence FWLGICTLFSSVFAFLFGLVV. The Lumenal segment spans residues 86–90; it reads TTKLG. Residues 91–111 traverse the membrane as a helical segment; the sequence is VPISVILLSEGLPFLVVTIGF. Over 112–169 the chain is Cytoplasmic; sequence EKNIVLTRAVMSHAIEHRRIQAQNSKSGKRSPDGSTQNMIQYAVQAAIKEKGFEIIRD. Residues 170-190 form a helical membrane-spanning segment; sequence YAIEIVILVIGAASGVQGGLQ. Topologically, residues 191-193 are lumenal; that stretch reads QFC. A helical transmembrane segment spans residues 194–214; it reads FLAAWTLFFDFILLFTFYTAI. Topologically, residues 215-272 are cytoplasmic; it reads LSIKLRSTVSSVMSICVWPLRMMASRRVAENVAKGDDELNRVRGDAPLFGRKSSSIPK. A helical membrane pass occupies residues 273-293; sequence FKVLMILGFIFVNIVNICSIP. At 294–401 the chain is on the lumenal side; the sequence is FRNPSSMSTI…GGILKSLEDP (108 aa). The chain crosses the membrane as a helical span at residues 402-422; sequence VLSKWIVIALALSVALNGYLF. The Cytoplasmic portion of the chain corresponds to 423–976; the sequence is NVARWGIKDP…RYSEVKAIDE (554 aa). Residue E618 is the Charge relay system of the active site. 624–630 contacts CoA; it reads SASRGCK. Residues 685 to 687 and 712 to 720 each bind NADP(+); these read SRF and DAMGMNMIS. Residue K752 is the Charge relay system of the active site. CoA is bound at residue 781–783; it reads VLK. D828 acts as the Charge relay system in catalysis. A CoA-binding site is contributed by 923-924; sequence AH. H924 serves as the catalytic Proton donor. The interval 926 to 954 is disordered; sequence QHNRSAAPSRSTTPGSSHDARLTGHDQCP. 928–929 contacts NADP(+); it reads NR. The segment covering 928–941 has biased composition (polar residues); sequence NRSAAPSRSTTPGS. The span at 943 to 953 shows a compositional bias: basic and acidic residues; that stretch reads HDARLTGHDQC.

Belongs to the HMG-CoA reductase family.

The protein resides in the endoplasmic reticulum membrane. It carries out the reaction (R)-mevalonate + 2 NADP(+) + CoA = (3S)-3-hydroxy-3-methylglutaryl-CoA + 2 NADPH + 2 H(+). It functions in the pathway metabolic intermediate biosynthesis; (R)-mevalonate biosynthesis; (R)-mevalonate from acetyl-CoA: step 3/3. Functionally, HMG-CoA reductase; part of the first module of ergosterol biosynthesis pathway that includes the early steps of the pathway, conserved across all eukaryotes, and which results in the formation of mevalonate from acetyl-coenzyme A (acetyl-CoA). In this module, the cytosolic acetyl-CoA acetyltransferase catalyzes the formation of acetoacetyl-CoA. The hydroxymethylglutaryl-CoA synthase then condenses acetyl-CoA with acetoacetyl-CoA to form HMG-CoA. The rate-limiting step of the early module is the reduction to mevalonate by the 3-hydroxy-3-methylglutaryl-coenzyme A (HMG-CoA) reductase HMGR. This is 3-hydroxy-3-methylglutaryl-coenzyme A reductase from Fusarium fujikuroi (Bakanae and foot rot disease fungus).